The following is a 434-amino-acid chain: Probable tRNA pseudouridine synthase D (434 aa).

The active-site Nucleophile is Asp93. The TRUD domain occupies 169–396; that stretch reads GTPNYFGQQR…SAGSRRAILL (228 aa).

Belongs to the pseudouridine synthase TruD family.

It carries out the reaction uridine(13) in tRNA = pseudouridine(13) in tRNA. Functionally, could be responsible for synthesis of pseudouridine from uracil-13 in transfer RNAs. This Halobacterium salinarum (strain ATCC 29341 / DSM 671 / R1) protein is Probable tRNA pseudouridine synthase D.